A 411-amino-acid chain; its full sequence is Arginine deiminase (411 aa).

Cys401 (amidino-cysteine intermediate) is an active-site residue.

Belongs to the arginine deiminase family.

The protein localises to the cytoplasm. It catalyses the reaction L-arginine + H2O = L-citrulline + NH4(+). The protein operates within amino-acid degradation; L-arginine degradation via ADI pathway; carbamoyl phosphate from L-arginine: step 1/2. The polypeptide is Arginine deiminase (Staphylococcus aureus (strain JH9)).